Consider the following 684-residue polypeptide: Beta-mannosyltransferase 1 (684 aa).

Residues 1-28 (MDKFIQSFSHQYLDSSSSLKLTARRKRK) are Cytoplasmic-facing. A helical membrane pass occupies residues 29-49 (LTILGLFLFSLISLMIIISYS). Residues 50 to 684 (NNNILPGLSG…KFCKIYGETF (635 aa)) are Extracellular-facing. Residue Asn-297 is glycosylated (N-linked (GlcNAc...) asparagine).

Belongs to the BMT family.

It is found in the membrane. Functionally, beta-mannosyltransferase involved in cell wall biosynthesis. Required for addition of the first beta-mannose residue to acid-stable fraction of cell wall phosphopeptidomannan. Plays a key role in reducing host inflammatory response. This Candida albicans (strain SC5314 / ATCC MYA-2876) (Yeast) protein is Beta-mannosyltransferase 1 (BMT1).